Here is a 740-residue protein sequence, read N- to C-terminus: DNA polymerase iota (740 aa).

Residues 1-21 form a disordered region; that stretch reads MEKLGVEPEEEGGGDDDEEDA. The segment covering 7-21 has biased composition (acidic residues); that stretch reads EPEEEGGGDDDEEDA. The 214-residue stretch at 55 to 268 folds into the UmuC domain; that stretch reads IVHVDLDCFY…NHIKEIPGIG (214 aa). Residues aspartate 59 and leucine 60 each contribute to the Mg(2+) site. Residues aspartate 59 and leucine 60 each contribute to the Mn(2+) site. Tyrosine 64 and arginine 96 together coordinate a 2'-deoxyribonucleoside 5'-triphosphate. Aspartate 151 is a binding site for Mg(2+). Aspartate 151 serves as a coordination point for Mn(2+). The active-site Proton acceptor is glutamate 152. DNA-binding regions lie at residues 249–314 and 325–439; these read ESCQ…FGED and QSFS…CNLK. The short motif at 527–544 is the Ubiquitin-binding 1 (UBM1) element; it reads VDQEVFKQLPVDIQEEIL. 2 disordered regions span residues 581–615 and 671–704; these read PINP…SSYM and NHTT…KITF. Over residues 605 to 615 the composition is skewed to low complexity; sequence SGFNSSSSSYM. Over residues 672–702 the composition is skewed to basic and acidic residues; that stretch reads HTTDSHKQTVATDSHEGLTENREPDSVDEKI. The Ubiquitin-binding 2 (UBM2) signature appears at 708 to 725; the sequence is IDPQVFYELPEAVQKELL.

The protein belongs to the DNA polymerase type-Y family. In terms of assembly, interacts with POLH. Interacts with REV1. Interacts with ubiquitin. Mg(2+) serves as cofactor. Requires Mn(2+) as cofactor. Monoubiquitinated. Protein monoubiquitination prevents POLI binding to ubiquitin via the ubiquitin-binding motif 1 and ubiquitin-binding motif 2. Ubiquitous. Highly expressed in testis.

It is found in the nucleus. The catalysed reaction is DNA(n) + a 2'-deoxyribonucleoside 5'-triphosphate = DNA(n+1) + diphosphate. Its function is as follows. Error-prone DNA polymerase specifically involved in DNA repair. Plays an important role in translesion synthesis, where the normal high-fidelity DNA polymerases cannot proceed and DNA synthesis stalls. Favors Hoogsteen base-pairing in the active site. Inserts the correct base with high-fidelity opposite an adenosine template. Exhibits low fidelity and efficiency opposite a thymidine template, where it will preferentially insert guanosine. May play a role in hypermutation of immunoglobulin genes. Forms a Schiff base with 5'-deoxyribose phosphate at abasic sites, but may not have lyase activity. The chain is DNA polymerase iota (POLI) from Homo sapiens (Human).